A 513-amino-acid chain; its full sequence is Na(+)/H(+) antiporter NhaB (513 aa).

12 consecutive transmembrane segments (helical) span residues 21 to 41, 64 to 84, 88 to 108, 119 to 139, 143 to 163, 202 to 222, 243 to 263, 299 to 318, 322 to 344, 350 to 370, 389 to 409, and 477 to 497; these read ICII…SPFV, QPGG…AHHV, IMAN…IYFM, LLIV…SATF, FLDA…FYGV, LLMH…VGEP, LPVS…LEHF, MGIQ…LHLA, IIGL…HAIG, PMPF…IVDL, LALF…VFVG, and MALP…EFLL.

Belongs to the NhaB Na(+)/H(+) (TC 2.A.34) antiporter family.

It localises to the cell inner membrane. It catalyses the reaction 2 Na(+)(in) + 3 H(+)(out) = 2 Na(+)(out) + 3 H(+)(in). In terms of biological role, na(+)/H(+) antiporter that extrudes sodium in exchange for external protons. This Actinobacillus pleuropneumoniae serotype 3 (strain JL03) protein is Na(+)/H(+) antiporter NhaB.